The sequence spans 113 residues: Ig heavy chain V-III region A4 (113 aa).

Residues 1–113 enclose the Ig-like domain; that stretch reads EVKLEESGGG…YWGQGTLVTV (113 aa). Residues cysteine 22 and cysteine 98 are joined by a disulfide bond.

In Mus musculus (Mouse), this protein is Ig heavy chain V-III region A4.